The sequence spans 159 residues: Cyclic pyranopterin monophosphate synthase (159 aa).

Substrate contacts are provided by residues 75–77 and 113–114; these read LCH and ME. Residue Asp128 is part of the active site.

It belongs to the MoaC family. In terms of assembly, homohexamer; trimer of dimers.

It catalyses the reaction (8S)-3',8-cyclo-7,8-dihydroguanosine 5'-triphosphate = cyclic pyranopterin phosphate + diphosphate. Its pathway is cofactor biosynthesis; molybdopterin biosynthesis. In terms of biological role, catalyzes the conversion of (8S)-3',8-cyclo-7,8-dihydroguanosine 5'-triphosphate to cyclic pyranopterin monophosphate (cPMP). This Yersinia pseudotuberculosis serotype O:3 (strain YPIII) protein is Cyclic pyranopterin monophosphate synthase.